The chain runs to 87 residues: Small ribosomal subunit protein bS20 (87 aa).

Belongs to the bacterial ribosomal protein bS20 family.

Binds directly to 16S ribosomal RNA. In Mycoplasma pneumoniae (strain ATCC 29342 / M129 / Subtype 1) (Mycoplasmoides pneumoniae), this protein is Small ribosomal subunit protein bS20.